A 195-amino-acid polypeptide reads, in one-letter code: Large ribosomal subunit protein bL17 (195 aa).

Residues 125–195 form a disordered region; sequence ANRARRVGAS…PTQDSDADKS (71 aa). Residues 136-152 are compositionally biased toward low complexity; the sequence is QTAPVAAAAAPQAAVEP. Acidic residues-rich tracts occupy residues 153 to 173 and 183 to 195; these read EATEGPDADDSSALPEAEDTT and TDDPTQDSDADKS.

It belongs to the bacterial ribosomal protein bL17 family. As to quaternary structure, part of the 50S ribosomal subunit. Contacts protein L32.

The sequence is that of Large ribosomal subunit protein bL17 from Mycobacterium sp. (strain JLS).